The following is a 2136-amino-acid chain: Methylcytosine dioxygenase TET1 (2136 aa).

Composition is skewed to basic residues over residues 1 to 12 (MSRSRHARPSRL) and 20 to 31 (KKKKNSQLRKTT). Residues 1-47 (MSRSRHARPSRLVRKEDVNKKKKNSQLRKTTKGANKNVASVKTLSPG) form a disordered region. Residues 32-43 (KGANKNVASVKT) are compositionally biased toward polar residues. The interval 528 to 674 (LGIAQLSQAG…NGPKSESMDY (147 aa)) is sufficient for binding to genomic CpG islands. A CXXC-type zinc finger spans residues 584-625 (EKKKRKRCGVCEPCQQKTNCGECTYCKNRKNSHQICKKRKCE). Residues Cys591, Cys594, Cys597, Cys603, Cys606, Cys609, Cys619, and Cys624 each contribute to the Zn(2+) site. 3 stretches are compositionally biased toward basic and acidic residues: residues 712–724 (QNKK…HVKG), 732–743 (EAEKSKNSEVDK), and 849–869 (IHNE…EPKD). Disordered stretches follow at residues 712–746 (QNKK…KKRT), 849–876 (IHNE…VQPS), 899–923 (QLSE…EQRT), and 1119–1169 (EKGT…VSYQ). Ser871 is subject to Phosphoserine. The segment covering 901-911 (SEAPSENSSPS) has biased composition (low complexity). Polar residues predominate over residues 1119–1139 (EKGTIQQKPPSSVHNNHGSSL). A compositionally biased stretch (basic residues) spans 1146 to 1163 (TQKKTKSTPSRDRRKKKP). Residues Cys1422, Cys1424, Cys1482, His1508, and Cys1510 each contribute to the Zn(2+) site. A 2-oxoglutarate-binding site is contributed by Arg1551. 4 residues coordinate Zn(2+): Cys1561, Cys1563, Cys1579, and Cys1588. Residues 1580–1593 (SWSMYFNGCKFGRS) are interaction with DNA. A Glycyl lysine isopeptide (Lys-Gly) (interchain with G-Cter in ubiquitin) cross-link involves residue Lys1589. Cys1648 contacts Zn(2+). Cys1664 contributes to the 2-oxoglutarate binding site. His1670 serves as a coordination point for Zn(2+). 2 residues coordinate Fe cation: His1672 and Asp1674. Asn1677 is a binding site for substrate. Residue His1706 coordinates 2-oxoglutarate. 2 disordered regions span residues 1774–1897 (EKKP…AAAD) and 1919–1984 (EPLI…SPAE). Low complexity predominate over residues 1786 to 1800 (NSTTTNNSKPSSLPT). Polar residues-rich tracts occupy residues 1824 to 1833 (SSDNTKTYSL) and 1937 to 1953 (HQPN…QDLA). Positions 1957-1976 (MEEDEQHSEADEPPSDEPLS) are enriched in acidic residues. Position 2028 (His2028) interacts with Fe cation. A 2-oxoglutarate-binding site is contributed by 2043–2045 (RLS). 2049–2051 (YQH) lines the substrate pocket. His2059 contributes to the Zn(2+) binding site. Positions 2074–2087 (KNKKMKASEQKDQA) are enriched in basic and acidic residues. The segment at 2074 to 2100 (KNKKMKASEQKDQAANEGPEQSSEVNE) is disordered.

The protein belongs to the TET family. As to quaternary structure, interacts with SIN3A; recruits the transcriptional corepressor SIN3A to gene promoters. Interacts with HCFC1. Interacts (via C-terminus) with OGT. Found in a complex composed of at least SINHCAF, SIN3A, HDAC1, SAP30, RBBP4, OGT and TET1. Interacts with QSER1. Interacts with NONO (via DNA-binding domain); this interaction recruits TET1 to genomic loci. Interacts with FOXA2; this interaction may recruit TET1 to specific enhancers to preserve their unmethylated status and hence allowing gene expression. Interacts with RNF2. Directly interacts (via C-terminus) with the DCAF1 component of the CRL4(VprBP) E3 ubiquitin-protein ligase complex. Interacts with UHRF1; this interaction induces the recruitment of TET1 to replicating heterochromatin. Interacts with DCAF1. The cofactor is Fe(2+). Zn(2+) serves as cofactor. In terms of processing, glycosylated. Interaction with OGT leads to GlcNAcylation. Post-translationally, monoubiquitinated at Lys-1589 by the DCX (DDB1-CUL4-X-box) E3 ubiquitin-protein ligase complex called CRL4(VprBP) or CUL4A-RBX1-DDB1-DCAF1/VPRBP complex; this modification promotes binding to DNA. As to expression, expressed in fetal heart, lung and brain, and in adult skeletal muscle, thymus and ovary. Not detected in adult heart, lung or brain. Up-regulated in glioblastoma cells (at protein level). In terms of tissue distribution, expressed in embryonic stem cells (at protein level).

It is found in the nucleus. The protein localises to the chromosome. It catalyses the reaction a 5-methyl-2'-deoxycytidine in DNA + 2-oxoglutarate + O2 = a 5-hydroxymethyl-2'-deoxycytidine in DNA + succinate + CO2. It carries out the reaction a 5-hydroxymethyl-2'-deoxycytidine in DNA + 2-oxoglutarate + O2 = a 5-formyl-2'-deoxycytidine in DNA + succinate + CO2 + H2O. The enzyme catalyses a 5-formyl-2'-deoxycytidine in DNA + 2-oxoglutarate + O2 = a 5-carboxyl-2'-deoxycytidine in DNA + succinate + CO2 + H(+). Functionally, dioxygenase that plays a key role in active DNA demethylation, by catalyzing the sequential oxidation of the modified genomic base 5-methylcytosine (5mC) into 5-hydroxymethylcytosine (5hmC), 5-formylcytosine (5fC), and 5-carboxylcytosine (5caC). In addition to its role in DNA demethylation, plays a more general role in chromatin regulation by recruiting histone modifying protein complexes to alter histone marks and chromatin accessibility, leading to both activation and repression of gene expression. Plays therefore a role in many biological processes, including stem cell maintenance, T- and B-cell development, inflammation regulation, genomic imprinting, neural activity or DNA repair. Involved in the balance between pluripotency and lineage commitment of cells and plays a role in embryonic stem cells maintenance and inner cell mass cell specification. Together with QSER1, plays an essential role in the protection and maintenance of transcriptional and developmental programs to inhibit the binding of DNMT3A/3B and therefore de novo methylation. May play a role in pancreatic beta-cell specification during development. In this context, may function as an upstream epigenetic regulator of PAX4 presumably through direct recruitment by FOXA2 to a PAX4 enhancer to preserve its unmethylated status, thereby potentiating PAX4 expression to adopt beta-cell fate during endocrine lineage commitment. Under DNA hypomethylation conditions, such as in female meiotic germ cells, may induce epigenetic reprogramming of pericentromeric heterochromatin (PCH), the constitutive heterochromatin of pericentromeric regions. PCH forms chromocenters in the interphase nucleus and chromocenters cluster at the prophase of meiosis. In this context, may also be essential for chromocenter clustering in a catalytic activity-independent manner, possibly through the recruitment polycomb repressive complex 1 (PRC1) to the chromocenters. During embryonic development, may be required for normal meiotic progression in oocytes and meiotic gene activation. Binds preferentially to DNA containing cytidine-phosphate-guanosine (CpG) dinucleotides over CpH (H=A, T, and C), hemimethylated-CpG and hemimethylated-hydroxymethyl-CpG. Dioxygenase that plays a key role in active DNA demethylation. Binds to promoters, particularly to those with high CG content. In hippocampal neurons, isoform 1 regulates the expression of a unique subset of genes compared to isoform 2, although some overlap exists between both isoforms, hence differentially regulates excitatory synaptic transmission. In hippocampal neuron cell cultures, isoform 1 controls both miniature excitatory postsynaptic current amplitude and frequency. Isoform 1 may regulate genes involved in hippocampal-dependent memory, leading to positive regulation of memory, contrary to isoform 2 that may decrease memory. Its function is as follows. Dioxygenase that plays a key role in active DNA demethylation. As isoform 1, binds to promoters, particularly to those with high CG content, however displays reduced global chromatin affinity compared with isoform 1, leading to decreased global DNA demethylation compared with isoform 1. Contrary to isoform 1, isoform 2 localizes during S phase to sites of ongoing DNA replication in heterochromatin, causing a significant de novo 5hmC formation, globally, and more so in heterochromatin, including LINE 1 interspersed DNA repeats leading to their activation. In hippocampal neurons, isoform 2 regulates the expression of a unique subset of genes compared to isoform 1, although some overlap between both isoforms, hence differentially regulates excitatory synaptic transmission. In hippocampal neuron cell cultures, isoform 2 controls miniature excitatory postsynaptic current frequency, but not amplitude. Isoform 2 may regulate genes involved in hippocampal-dependent memory, leading to negative regulation of memory, contrary to isoform 1 that may improve memory. In immature and partially differentiated gonadotrope cells, directly represses luteinizing hormone gene LHB expression and does not catalyze 5hmC at the gene promoter. This chain is Methylcytosine dioxygenase TET1, found in Homo sapiens (Human).